The sequence spans 267 residues: Rhomboid-type serine protease 2 (267 aa).

6 consecutive transmembrane segments (helical) span residues 20 to 40 (LPLF…ASLQ), 67 to 87 (FPLI…LTPL), 99 to 119 (TSLA…YVLI), 126 to 146 (ANHG…MESI), 155 to 179 (FVIG…AALI), and 185 to 206 (LGHL…KLLA). The active-site Nucleophile is the S134. Residue H187 is part of the active site. The tract at residues 247–267 (RPGPSGSAATELVGTTQRLGP) is disordered.

This sequence belongs to the peptidase S54 family.

The protein resides in the golgi apparatus membrane. It localises to the golgi apparatus. The protein localises to the cis-Golgi network membrane. The catalysed reaction is Cleaves type-1 transmembrane domains using a catalytic dyad composed of serine and histidine that are contributed by different transmembrane domains.. Functionally, probable rhomboid-type serine protease that catalyzes intramembrane proteolysis. In Gibberella zeae (strain ATCC MYA-4620 / CBS 123657 / FGSC 9075 / NRRL 31084 / PH-1) (Wheat head blight fungus), this protein is Rhomboid-type serine protease 2 (RBD2).